A 346-amino-acid chain; its full sequence is L-glyceraldehyde 3-phosphate reductase (346 aa).

NADP(+) is bound by residues Trp33, Asp61, Tyr66, Ser168, Gln193, Thr223, Leu225, Gln227, Lys233, Ser303, Gln307, and Asn311.

Belongs to the shaker potassium channel beta subunit family. In terms of assembly, homotetramer. Homooctamer.

It carries out the reaction a primary alcohol + NADP(+) = an aldehyde + NADPH + H(+). The enzyme catalyses hydroxyacetone + NADP(+) = methylglyoxal + NADPH + H(+). Aldo-keto reductase that catalyzes the stereospecific, NADPH-dependent reduction of L-glyceraldehyde 3-phosphate (L-GAP) to L-glycerol 3-phosphate (L-G3P). The physiological role of Gpr is the detoxification of L-GAP, which may be formed via non-enzymatic and/or enzymatic racemization of D-GAP. Also contributes to cellular methylglyoxal detoxification by catalyzing the NADPH-dependent conversion of methylglyoxal to acetol. However, the catalytic efficiency of methylglyoxal reductase activity is more than 2 orders of magnitude lower than the L-GAP reductase activity. In addition, exhibits activity with glyoxal and probably plays a significant role in detoxification of glyoxal in vivo. Shows broad specificity and can use aromatic aldehydes such as 4-nitrobenzaldehyde and benzaldehyde, D,L-glyceraldehyde, phenylglyoxal, isatin and the model substrate 4-nitrobenzaldehyde. This Escherichia coli (strain K12) protein is L-glyceraldehyde 3-phosphate reductase.